Consider the following 22-residue polypeptide: Chlorophyllase type 1 (22 aa).

This sequence belongs to the AB hydrolase superfamily. Lipase family.

It carries out the reaction a chlorophyll + H2O = a chlorophyllide + phytol + H(+). It participates in porphyrin-containing compound metabolism; chlorophyll degradation. In terms of biological role, catalyzes the hydrolysis of ester bond in chlorophyll to yield chlorophyllide and phytol. This is Chlorophyllase type 1 from Chenopodium album (Fat hen).